Here is a 104-residue protein sequence, read N- to C-terminus: uncharacterized protein (104 aa).

2 helical membrane passes run I53 to F73 and I74 to I94.

Its subcellular location is the cell membrane. This is an uncharacterized protein from Methanocaldococcus jannaschii (strain ATCC 43067 / DSM 2661 / JAL-1 / JCM 10045 / NBRC 100440) (Methanococcus jannaschii).